Consider the following 121-residue polypeptide: Large ribosomal subunit protein bL12 (121 aa).

Belongs to the bacterial ribosomal protein bL12 family. Homodimer. Part of the ribosomal stalk of the 50S ribosomal subunit. Forms a multimeric L10(L12)X complex, where L10 forms an elongated spine to which 2 to 4 L12 dimers bind in a sequential fashion. Binds GTP-bound translation factors.

Functionally, forms part of the ribosomal stalk which helps the ribosome interact with GTP-bound translation factors. Is thus essential for accurate translation. The sequence is that of Large ribosomal subunit protein bL12 from Shewanella pealeana (strain ATCC 700345 / ANG-SQ1).